A 1132-amino-acid polypeptide reads, in one-letter code: Telomerase reverse transcriptase (1132 aa).

Positions M1 to N66 are disordered. Polar residues-rich tracts occupy residues S9–T26 and Q45–R55. The Reverse transcriptase domain occupies K602–I956. Mg(2+)-binding residues include D708, D886, and D887.

This sequence belongs to the reverse transcriptase family. Telomerase subfamily.

It is found in the nucleus. Its subcellular location is the chromosome. The protein localises to the telomere. The catalysed reaction is DNA(n) + a 2'-deoxyribonucleoside 5'-triphosphate = DNA(n+1) + diphosphate. Its function is as follows. Telomerase is a ribonucleoprotein enzyme essential for the replication of chromosome termini in most eukaryotes. It elongates telomeres. It is a reverse transcriptase that adds simple sequence repeats to chromosome ends by copying a template sequence within the RNA component of the enzyme. This chain is Telomerase reverse transcriptase (TERT), found in Oxytricha trifallax (Sterkiella histriomuscorum).